A 293-amino-acid polypeptide reads, in one-letter code: MAAITISSSLHASASPRVVRPHVSRNTPVITLYSRFTPSFSFPSLSFTLRDTAPSRRRSFFIASAVKSLTETELLPITEADSIPSASGVYAVYDKSDELQFVGISRNIAASVSAHLKSVPELCGSVKVGIVEEPDKAVLTQAWKLWIEEHIKVTGKVPPGNKSGNNTFVKQTPRKKSDIRLTPGRHVELTVPLEELIDRLVKESKVVAFIKGSRSAPQCGFSQRVVGILESQGVDYETVDVLDDEYNHGLRETLKNYSNWPTFPQIFVKGELVGGCDILTSMYENGELANILN.

A chloroplast-targeting transit peptide spans 1 to 62; that stretch reads MAAITISSSL…APSRRRSFFI (62 aa). An intrachain disulfide couples Cys-123 to Cys-219. The Glutaredoxin domain occupies 194 to 293; the sequence is EELIDRLVKE…ENGELANILN (100 aa). Residue Lys-211 coordinates glutathione. Cys-219 lines the [2Fe-2S] cluster pocket. Residues Arg-251, Phe-263, and 276-277 each bind glutathione; that span reads CD.

It belongs to the glutaredoxin family. CGFS subfamily. As to quaternary structure, [2Fe-2S]-bridged holo-homodimer. Interacts in vitro with SUFE1, BOLA1, BOLA2 and BOLA4. Interacts in vivo only with SUFE1, BOLA1 and BOLA4. Interacts with SBP1.

It is found in the plastid. The protein resides in the chloroplast. The formation of an intramolecular disulfide bond negatively regulates both the N-terminal endonuclease and the C-terminal glutaredoxin activities. Functionally, may only reduce GSH-thiol disulfides, but not protein disulfides. Participates probably to the maturation of iron-sulfur proteins and to the regulation of the redox state of the BOLA proteins. The GRXS16-BOLA1 heterodimer binds a labile, oxygen sensitive iron-sulfur cluster. Able to cleave linearized DNA in vitro. The sequence is that of Bifunctional monothiol glutaredoxin-S16, chloroplastic from Arabidopsis thaliana (Mouse-ear cress).